Reading from the N-terminus, the 140-residue chain is Calcium-binding protein B (140 aa).

2 EF-hand domains span residues 38-73 and 74-109; these read ATLSKYKTQFMSYDINNSGDIDHYELQLLMEKINQP and KTYLELKKMIEQVDSTGKGAINFRDFIKMMTGKTSS. Residues aspartate 51, asparagine 53, serine 55, aspartate 57, and glutamate 62 each contribute to the Ca(2+) site.

This is Calcium-binding protein B (cbpB) from Dictyostelium discoideum (Social amoeba).